Reading from the N-terminus, the 292-residue chain is Large ribosomal subunit protein bL19m (292 aa).

The tract at residues 40-61 (PVRQQSTGPSEPGAFQPPPKPV) is disordered. Serine 77 is subject to Phosphoserine.

The protein belongs to the bacterial ribosomal protein bL19 family. Component of the mitochondrial ribosome large subunit (39S) which comprises a 16S rRNA and about 50 distinct proteins.

It is found in the mitochondrion. In Pongo abelii (Sumatran orangutan), this protein is Large ribosomal subunit protein bL19m (MRPL19).